The following is a 374-amino-acid chain: MSDHIRAASSPSRHGSEHGWQHAVTPQQRNRILVATWMFTLCFMILVMVMLGGATRLTGSGLSIMEWAPLMGTLPPTSQTEWERLYALYQKIPQYALVNHGFGLDGFKHIFWLEWTHRLWGRLIGLVLLLPLIFLAVTRRIERSLIPRLILIFVLGGLQGAVGWFMVASGFFPDSTAVSPYRLVVHLSFALLLYSALLWTALSVLNPEPRPLPGTVGLRRMSAVTLGLVCITIIAGGFVAGIHAGLDYNTFPLMDGRLVPEGYGEGHRAMFENIPTVQFDHRLLATLTALTALLTGLIGFRRGGNARRAVLPLMVAVILQYALGIATLLSVVAVPVAVVHQGMAVLLLTAAIVTLHSLRGAGRTASINAPASSH.

The segment at 1 to 22 is disordered; it reads MSDHIRAASSPSRHGSEHGWQH. 5 consecutive transmembrane segments (helical) span residues 32-52, 118-138, 149-169, 184-204, and 226-246; these read ILVA…VMLG, RLWG…LAVT, LILI…MVAS, VVHL…ALSV, and LGLV…HAGL. His-281 provides a ligand contact to heme. The next 3 helical transmembrane spans lie at 283–300, 309–329, and 332–352; these read LLAT…LIGF, AVLP…ATLL, and VAVP…TAAI. Residue His-340 participates in heme binding.

It belongs to the COX15/CtaA family. Type 2 subfamily. In terms of assembly, interacts with CtaB. Requires heme b as cofactor.

The protein localises to the cell membrane. It catalyses the reaction Fe(II)-heme o + 2 A + H2O = Fe(II)-heme a + 2 AH2. It participates in porphyrin-containing compound metabolism; heme A biosynthesis; heme A from heme O: step 1/1. In terms of biological role, catalyzes the conversion of heme O to heme A by two successive hydroxylations of the methyl group at C8. The first hydroxylation forms heme I, the second hydroxylation results in an unstable dihydroxymethyl group, which spontaneously dehydrates, resulting in the formyl group of heme A. The sequence is that of Heme A synthase from Granulibacter bethesdensis (strain ATCC BAA-1260 / CGDNIH1).